We begin with the raw amino-acid sequence, 565 residues long: Proline--tRNA ligase (565 aa).

This sequence belongs to the class-II aminoacyl-tRNA synthetase family. ProS type 1 subfamily. As to quaternary structure, homodimer.

Its subcellular location is the cytoplasm. It catalyses the reaction tRNA(Pro) + L-proline + ATP = L-prolyl-tRNA(Pro) + AMP + diphosphate. In terms of biological role, catalyzes the attachment of proline to tRNA(Pro) in a two-step reaction: proline is first activated by ATP to form Pro-AMP and then transferred to the acceptor end of tRNA(Pro). As ProRS can inadvertently accommodate and process non-cognate amino acids such as alanine and cysteine, to avoid such errors it has two additional distinct editing activities against alanine. One activity is designated as 'pretransfer' editing and involves the tRNA(Pro)-independent hydrolysis of activated Ala-AMP. The other activity is designated 'posttransfer' editing and involves deacylation of mischarged Ala-tRNA(Pro). The misacylated Cys-tRNA(Pro) is not edited by ProRS. This chain is Proline--tRNA ligase, found in Lactobacillus johnsonii (strain CNCM I-12250 / La1 / NCC 533).